The primary structure comprises 697 residues: Elongation factor G (697 aa).

Positions 8-282 (EDYRNIGIMA…AVVDYLPSPL (275 aa)) constitute a tr-type G domain. GTP contacts are provided by residues 17–24 (AHIDAGKT), 81–85 (DTPGH), and 135–138 (NKMD).

The protein belongs to the TRAFAC class translation factor GTPase superfamily. Classic translation factor GTPase family. EF-G/EF-2 subfamily.

It is found in the cytoplasm. Functionally, catalyzes the GTP-dependent ribosomal translocation step during translation elongation. During this step, the ribosome changes from the pre-translocational (PRE) to the post-translocational (POST) state as the newly formed A-site-bound peptidyl-tRNA and P-site-bound deacylated tRNA move to the P and E sites, respectively. Catalyzes the coordinated movement of the two tRNA molecules, the mRNA and conformational changes in the ribosome. The protein is Elongation factor G of Mycoplasmopsis agalactiae (strain NCTC 10123 / CIP 59.7 / PG2) (Mycoplasma agalactiae).